The following is a 283-amino-acid chain: Small ribosomal subunit protein uS2B (283 aa).

The disordered stretch occupies residues 254–283; sequence GQVGQSAWDEEGDWNTTGAAQTSDWANTVA. The span at 267–283 shows a compositional bias: polar residues; that stretch reads WNTTGAAQTSDWANTVA.

Belongs to the universal ribosomal protein uS2 family. As to quaternary structure, component of the small ribosomal subunit. Mature ribosomes consist of a small (40S) and a large (60S) subunit. The 40S subunit contains about 33 different proteins and 1 molecule of RNA (18S). The 60S subunit contains about 49 different proteins and 3 molecules of RNA (25S, 5.8S and 5S). Interacts with rps21.

The protein resides in the cytoplasm. In terms of biological role, required for the assembly and/or stability of the 40S ribosomal subunit. Required for the processing of the 20S rRNA-precursor to mature 18S rRNA in a late step of the maturation of 40S ribosomal subunits. The polypeptide is Small ribosomal subunit protein uS2B (rps0b) (Schizosaccharomyces japonicus (strain yFS275 / FY16936) (Fission yeast)).